Reading from the N-terminus, the 256-residue chain is Ribonuclease 3 (256 aa).

The RNase III domain occupies 3–125 (LDALQQRLGY…IVGAVFLDAG (123 aa)). Residue Glu-38 participates in Mg(2+) binding. Asp-42 is an active-site residue. Positions 111 and 114 each coordinate Mg(2+). Residue Glu-114 is part of the active site. One can recognise a DRBM domain in the interval 152-222 (DAKTLLQEYL…AKLALDEVQK (71 aa)). The tract at residues 229-256 (KRSRAERTGKTRKQPVPPDPQLSLRLKE) is disordered.

The protein belongs to the ribonuclease III family. Homodimer. Requires Mg(2+) as cofactor.

The protein resides in the cytoplasm. The enzyme catalyses Endonucleolytic cleavage to 5'-phosphomonoester.. Functionally, digests double-stranded RNA. Involved in the processing of primary rRNA transcript to yield the immediate precursors to the large and small rRNAs (23S and 16S). Processes some mRNAs, and tRNAs when they are encoded in the rRNA operon. Processes pre-crRNA and tracrRNA of type II CRISPR loci if present in the organism. The protein is Ribonuclease 3 of Cupriavidus pinatubonensis (strain JMP 134 / LMG 1197) (Cupriavidus necator (strain JMP 134)).